Consider the following 374-residue polypeptide: MKALIFAAAGLLLLLPTFCQSGMENDTNNLAKPTLPIKTFRGAPPNSFEEFPFSALEGWTGATITVKIKCPEESASHLHVKNATMGYLTSSLSTKLIPAIYLLVFVVGVPANAVTLWMLFFRTRSICTTVFYTNLAIADFLFCVTLPFKIAYHLNGNNWVFGEVLCRATTVIFYGNMYCSILLLACISINRYLAIVHPFTYRGLPKHTYALVTCGLVWATVFLYMLPFFILKQEYYLVQPDITTCHDVHNTCESSSPFQLYYFISLAFFGFLIPFVLIIYCYAAIIRTLNAYDHRWLWYVKASLLILVIFTICFAPSNIILIIHHANYYYNNTDGLYFIYLIALCLGSLNSCLDPFLYFLMSKTRNHSTAYLTK.

Positions 1–21 (MKALIFAAAGLLLLLPTFCQS) are cleaved as a signal peptide. A propeptide spans 22–38 (GMENDTNNLAKPTLPIK) (removed for receptor activation). 2 N-linked (GlcNAc...) asparagine glycosylation sites follow: Asn-25 and Asn-82. The Extracellular portion of the chain corresponds to 39 to 94 (TFRGAPPNSFEEFPFSALEGWTGATITVKIKCPEESASHLHVKNATMGYLTSSLST). The helical transmembrane segment at 95–120 (KLIPAIYLLVFVVGVPANAVTLWMLF) threads the bilayer. The Cytoplasmic segment spans residues 121–128 (FRTRSICT). Residues 129 to 148 (TVFYTNLAIADFLFCVTLPF) traverse the membrane as a helical segment. Topologically, residues 149 to 167 (KIAYHLNGNNWVFGEVLCR) are extracellular. A disulfide bond links Cys-166 and Cys-245. Residues 168 to 189 (ATTVIFYGNMYCSILLLACISI) traverse the membrane as a helical segment. At 190 to 206 (NRYLAIVHPFTYRGLPK) the chain is on the cytoplasmic side. Residues 207-230 (HTYALVTCGLVWATVFLYMLPFFI) form a helical membrane-spanning segment. At 231–260 (LKQEYYLVQPDITTCHDVHNTCESSSPFQL) the chain is on the extracellular side. Residues 261 to 280 (YYFISLAFFGFLIPFVLIIY) traverse the membrane as a helical segment. The Cytoplasmic portion of the chain corresponds to 281 to 297 (CYAAIIRTLNAYDHRWL). Residues 298-322 (WYVKASLLILVIFTICFAPSNIILI) form a helical membrane-spanning segment. Topologically, residues 323–336 (IHHANYYYNNTDGL) are extracellular. N-linked (GlcNAc...) asparagine glycosylation is present at Asn-331. A helical membrane pass occupies residues 337-361 (YFIYLIALCLGSLNSCLDPFLYFLM). The Cytoplasmic portion of the chain corresponds to 362-374 (SKTRNHSTAYLTK).

It belongs to the G-protein coupled receptor 1 family. As to quaternary structure, interacts with INSC/inscuteable and probably GPSM2. A proteolytic cleavage generates a new N-terminus that functions as a tethered ligand. As to expression, highest expression in the megakaryocytes of the bone marrow, lower in mature megakaryocytes, in platelets and in a variety of other tissues such as heart and gut.

Its subcellular location is the cell membrane. Its function is as follows. Receptor for activated thrombin coupled to G proteins that stimulate phosphoinositide hydrolysis. The chain is Proteinase-activated receptor 3 (F2RL2) from Homo sapiens (Human).